Consider the following 95-residue polypeptide: Aspartyl/glutamyl-tRNA(Asn/Gln) amidotransferase subunit C (95 aa).

Belongs to the GatC family. In terms of assembly, heterotrimer of A, B and C subunits.

It catalyses the reaction L-glutamyl-tRNA(Gln) + L-glutamine + ATP + H2O = L-glutaminyl-tRNA(Gln) + L-glutamate + ADP + phosphate + H(+). The enzyme catalyses L-aspartyl-tRNA(Asn) + L-glutamine + ATP + H2O = L-asparaginyl-tRNA(Asn) + L-glutamate + ADP + phosphate + 2 H(+). Its function is as follows. Allows the formation of correctly charged Asn-tRNA(Asn) or Gln-tRNA(Gln) through the transamidation of misacylated Asp-tRNA(Asn) or Glu-tRNA(Gln) in organisms which lack either or both of asparaginyl-tRNA or glutaminyl-tRNA synthetases. The reaction takes place in the presence of glutamine and ATP through an activated phospho-Asp-tRNA(Asn) or phospho-Glu-tRNA(Gln). This chain is Aspartyl/glutamyl-tRNA(Asn/Gln) amidotransferase subunit C, found in Rhodospirillum rubrum (strain ATCC 11170 / ATH 1.1.1 / DSM 467 / LMG 4362 / NCIMB 8255 / S1).